Consider the following 428-residue polypeptide: Lysophosphatidic acid phosphatase type 6 (428 aa).

A mitochondrion-targeting transit peptide spans 1-32 (MITGVFSMRLWTPVGVLTSLAYCLHQRRVALA). A substrate binding region spans residues 58–168 (RHGARSPRKP…VFIRSTNIFR (111 aa)). H59 (nucleophile) is an active-site residue. The active-site Proton donor is the D335.

This sequence belongs to the histidine acid phosphatase family. Monomer.

The protein resides in the mitochondrion. The enzyme catalyses a phosphate monoester + H2O = an alcohol + phosphate. It catalyses the reaction 1-(9Z-octadecenoyl)-sn-glycero-3-phosphate + H2O = 1-(9Z-octadecenoyl)-sn-glycerol + phosphate. In terms of biological role, hydrolyzes lysophosphatidic acid (LPA) containing a medium length fatty acid chain to the corresponding monoacylglycerol. Has highest activity with lysophosphatidic acid containing myristate (C14:0), monounsaturated oleate (C18:1) or palmitate (C16:0), and lower activity with C18:0 and C6:0 lysophosphatidic acid. In Pongo abelii (Sumatran orangutan), this protein is Lysophosphatidic acid phosphatase type 6 (ACP6).